Reading from the N-terminus, the 93-residue chain is Small ribosomal subunit protein uS19c (93 aa).

It belongs to the universal ribosomal protein uS19 family.

Its subcellular location is the plastid. It localises to the chloroplast. Its function is as follows. Protein S19 forms a complex with S13 that binds strongly to the 16S ribosomal RNA. The sequence is that of Small ribosomal subunit protein uS19c from Zygnema circumcarinatum (Green alga).